Reading from the N-terminus, the 173-residue chain is Large ribosomal subunit protein uL16 (173 aa).

Belongs to the universal ribosomal protein uL16 family.

The protein is Large ribosomal subunit protein uL16 of Methanosphaerula palustris (strain ATCC BAA-1556 / DSM 19958 / E1-9c).